A 1855-amino-acid polypeptide reads, in one-letter code: Collagen alpha-1(XXVII) chain (1855 aa).

The first 48 residues, 1-48, serve as a signal peptide directing secretion; it reads MGLARATAGLGPCCPPAPALLGAGLRWGGFLFAWILVSFSCHLASTQG. Positions 49–618 are cleaved as a propeptide — N-terminal propeptide; sequence APEDVDVLQR…PEPTPFLMLM (570 aa). The Laminin G-like domain maps to 81–246; sequence PSGFIFTQRA…NYCAHLRERC (166 aa). N-linked (GlcNAc...) asparagine glycosylation is found at N281 and N349. 4 disordered regions span residues 317–428, 511–580, 617–787, and 838–1617; these read DVSK…SATV, PPLG…SQLS, LMGP…GFPG, and GGVG…HPVQ. Polar residues-rich tracts occupy residues 382–427 and 520–532; these read LSVT…SSAT and MMPS…STPA. The segment covering 563 to 573 has biased composition (basic and acidic residues); it reads TARDASPRDLT. 13 consecutive Collagen-like domains span residues 619-673, 682-741, 751-810, 826-885, 886-945, 946-1005, 1006-1047, 1048-1105, 1108-1155, 1156-1215, 1216-1275, 1276-1330, and 1334-1393; these read GPPG…GDPG, GAKG…PGPV, GYIG…PGPP, GYPG…PGPM, GKAG…EGPM, GPPG…VGEK, GDRG…PGSR, GLPG…GAKG, GIPG…PGLP, GDSG…KGQE, GLKG…PGTP, GPKG…GEDG, and GAPG…KGSK. A triple-helical region region spans residues 619 to 1612; the sequence is GPPGSKGDCG…RGRPGPPGPP (994 aa). Residues 630–663 are compositionally biased toward pro residues; that stretch reads PGPPGLPGLPGSPGPRGPRGPPGPFGNPGLPGPP. A compositionally biased stretch (low complexity) spans 708–728; that stretch reads PGAAGHPGEQGQPGPEGSPGA. Residues 905–918 are compositionally biased toward low complexity; the sequence is FPGDIGPPGDNGPE. Over residues 1027 to 1036 the composition is skewed to gly residues; the sequence is GTPGGVGDPG. 3 stretches are compositionally biased toward low complexity: residues 1083 to 1095, 1121 to 1131, and 1161 to 1176; these read RGRP…QGAA, LPGEPGSQGPQ, and KGDL…QGLI. 3 stretches are compositionally biased toward basic and acidic residues: residues 1196–1221, 1320–1332, and 1344–1354; these read LKGD…KGEE, KGEK…DGKT, and PVGDRGDRGEP. Low complexity-rich tracts occupy residues 1369–1378 and 1404–1431; these read RGEPGQQGQP and KAGA…RQGP. 3 consecutive Collagen-like domains span residues 1433-1492, 1493-1552, and 1553-1612; these read GMAG…SGLP, GQLG…KGIQ, and GPRG…PGPP. The segment covering 1566–1581 has biased composition (low complexity); the sequence is IIGPPGMLGPSGLPGP. The span at 1597–1614 shows a compositional bias: pro residues; it reads RGPPGPRGRPGPPGPPWH. A propeptide spans 1616–1855 (C-terminal propeptide); it reads VQFQQDDLEA…RLEVGPACFL (240 aa). The region spanning 1655–1855 is the Fibrillar collagen NC1 domain; sequence GEIFKTLHYL…RLEVGPACFL (201 aa). Disulfide bonds link C1685/C1717, C1726/C1853, and C1762/C1806. Positions 1703, 1705, 1708, and 1711 each coordinate Ca(2+). N1764 carries an N-linked (GlcNAc...) asparagine glycan.

It belongs to the fibrillar collagen family.

It is found in the secreted. The protein resides in the extracellular space. It localises to the extracellular matrix. Functionally, plays a role during the calcification of cartilage and the transition of cartilage to bone. The protein is Collagen alpha-1(XXVII) chain (Col27a1) of Rattus norvegicus (Rat).